Reading from the N-terminus, the 590-residue chain is MLRTRTAGSLRPADAGQTVTLAGWVARRRDHGGVIFIDLRDASGVSQVVFRDGAVLEQAHRLRSEFCVAVTGVVEIRPEGNANADIPTGEVEVNATSLTVLGESAALPFQLDETAGEEARLKYRYLDLRREVPGNAIRLRSKVNAAARGVLAGHDFVEIETPTLTRSTPEGARDFLVPARLQPGSFYALPQSPQLFKQLLMVAGMERYYQIARCYRDEDFRADRQPEFTQLDMEMSFVDADDVMALSEEVLRAVWATIGYDLPLPLPRISYADAMRRFGSDKPDLRFGLELVECTEYFADTPFRVFQAPYVGAVVMPGGASQPRRTLDGWQEFAKQRGHKGLAYVLVGKDGELTGPVAKNLTDAERAGLTAHVGANPGDCVFFAAGTAKSARALLGATRIEVAKRLDLIDPDAWAFTWVVDWPMFESAAEATASGDVAVGSGAWTAMHHAFTAPTPESEATFDTDPGSALSNAYDIVCNGNEIGGGSLRIHRRDVQERVFAMMGISQEEAEDKFGFLLEAFTFGAPPHGGIAFGWDRIVALLAGLDSIREVIAFPKSGGGVDPLTEAPAPITAQQRKESGIDAKPGKDGA.

Position 170 (Glu170) interacts with L-aspartate. The segment at 194–197 (QLFK) is aspartate. Arg216 provides a ligand contact to L-aspartate. ATP is bound by residues 216-218 (RDE) and Gln225. His448 provides a ligand contact to L-aspartate. An ATP-binding site is contributed by Glu482. An L-aspartate-binding site is contributed by Arg489. An ATP-binding site is contributed by 534 to 537 (GWDR). The interval 559-590 (GGVDPLTEAPAPITAQQRKESGIDAKPGKDGA) is disordered. Over residues 575-590 (QRKESGIDAKPGKDGA) the composition is skewed to basic and acidic residues.

This sequence belongs to the class-II aminoacyl-tRNA synthetase family. Type 1 subfamily. As to quaternary structure, homodimer.

It is found in the cytoplasm. The enzyme catalyses tRNA(Asx) + L-aspartate + ATP = L-aspartyl-tRNA(Asx) + AMP + diphosphate. Functionally, aspartyl-tRNA synthetase with relaxed tRNA specificity since it is able to aspartylate not only its cognate tRNA(Asp) but also tRNA(Asn). Reaction proceeds in two steps: L-aspartate is first activated by ATP to form Asp-AMP and then transferred to the acceptor end of tRNA(Asp/Asn). The chain is Aspartate--tRNA(Asp/Asn) ligase from Mycolicibacterium gilvum (strain PYR-GCK) (Mycobacterium gilvum (strain PYR-GCK)).